The sequence spans 589 residues: Polypeptide N-acetylgalactosaminyltransferase 4 (589 aa).

The Cytoplasmic portion of the chain corresponds to 1–11 (MLPRMLKMKTV). The helical; Signal-anchor for type II membrane protein transmembrane segment at 12–31 (GTVLAVIWLFGLAFIYVQST) threads the bilayer. Topologically, residues 32-589 (SSSLRPPGRH…WIFEKLDTYE (558 aa)) are lumenal. The disordered stretch occupies residues 33 to 73 (SSLRPPGRHPPPLPQLDPLIPQNPPQNDEIRPKKSAPPIPT). Disulfide bonds link cysteine 140/cysteine 369, cysteine 360/cysteine 438, cysteine 471/cysteine 488, cysteine 514/cysteine 531, and cysteine 553/cysteine 571. The catalytic subdomain A stretch occupies residues 150-255 (MQPTTVIITY…QKWLEPLLAR (106 aa)). Residues aspartate 191 and arginine 216 each contribute to the substrate site. Aspartate 239 serves as a coordination point for Mn(2+). Substrate is bound at residue serine 240. Histidine 241 contributes to the Mn(2+) binding site. A catalytic subdomain B region spans residues 315–377 (PIRSPTMAGG…PCSRVGHVFR (63 aa)). Substrate is bound at residue tryptophan 346. Histidine 374 contributes to the Mn(2+) binding site. Substrate-binding residues include arginine 377, histidine 380, and tyrosine 382. One can recognise a Ricin B-type lectin domain in the interval 458–589 (TPGKSFQMKI…WIFEKLDTYE (132 aa)). N-linked (GlcNAc...) asparagine glycosylation occurs at asparagine 523.

The protein belongs to the glycosyltransferase 2 family. GalNAc-T subfamily. It depends on Mn(2+) as a cofactor.

The protein resides in the golgi apparatus membrane. The catalysed reaction is L-seryl-[protein] + UDP-N-acetyl-alpha-D-galactosamine = a 3-O-[N-acetyl-alpha-D-galactosaminyl]-L-seryl-[protein] + UDP + H(+). It catalyses the reaction L-threonyl-[protein] + UDP-N-acetyl-alpha-D-galactosamine = a 3-O-[N-acetyl-alpha-D-galactosaminyl]-L-threonyl-[protein] + UDP + H(+). Its pathway is protein modification; protein glycosylation. Catalyzes the initial reaction in O-linked oligosaccharide biosynthesis, the transfer of an N-acetyl-D-galactosamine residue to a serine or threonine residue on the protein receptor. The sequence is that of Polypeptide N-acetylgalactosaminyltransferase 4 (gly-4) from Caenorhabditis elegans.